We begin with the raw amino-acid sequence, 514 residues long: tRNA-2-methylthio-N(6)-dimethylallyladenosine synthase (514 aa).

The interval 1–21 is disordered; it reads MNEEQRKASSVDVLAERDKKA. Residues 68–186 form the MTTase N-terminal domain; it reads RTFLIKTYGC…LPEILEEAYL (119 aa). Cysteine 77, cysteine 113, cysteine 147, cysteine 223, cysteine 227, and cysteine 230 together coordinate [4Fe-4S] cluster. The 232-residue stretch at 209 to 440 folds into the Radical SAM core domain; sequence REGNIKAWVN…KKVGHYSQIA (232 aa). The TRAM domain maps to 442-505; it reads SKYEGQTVTV…QYSLNGSFIK (64 aa).

Belongs to the methylthiotransferase family. MiaB subfamily. Monomer. The cofactor is [4Fe-4S] cluster.

The protein localises to the cytoplasm. It catalyses the reaction N(6)-dimethylallyladenosine(37) in tRNA + (sulfur carrier)-SH + AH2 + 2 S-adenosyl-L-methionine = 2-methylsulfanyl-N(6)-dimethylallyladenosine(37) in tRNA + (sulfur carrier)-H + 5'-deoxyadenosine + L-methionine + A + S-adenosyl-L-homocysteine + 2 H(+). Its function is as follows. Catalyzes the methylthiolation of N6-(dimethylallyl)adenosine (i(6)A), leading to the formation of 2-methylthio-N6-(dimethylallyl)adenosine (ms(2)i(6)A) at position 37 in tRNAs that read codons beginning with uridine. The polypeptide is tRNA-2-methylthio-N(6)-dimethylallyladenosine synthase (Staphylococcus aureus (strain USA300 / TCH1516)).